A 377-amino-acid polypeptide reads, in one-letter code: Endoplasmic reticulum-Golgi intermediate compartment protein 2 (377 aa).

The Cytoplasmic segment spans residues 1-33 (MRRLNRKKTLSLVKELDAFPKVPESYVETSASG). Residues 34–54 (GTVSLIAFTTMALLTIMEFSV) traverse the membrane as a helical segment. At 55-319 (YQDTWMKYEY…PFWQFFVRLC (265 aa)) the chain is on the lumenal side. The helical transmembrane segment at 320-340 (GIVGGIFSTTGMLHGIGKFIV) threads the bilayer. The Cytoplasmic segment spans residues 341-377 (EIICCRFRLGSYKPVNSVPFEDGHTDNHLPLLENNTH).

It belongs to the ERGIC family. In terms of assembly, may form a heteromeric complex composed of ERGIC1, ERGIC2 and ERGIC3. Interacts with ERGIC3, the interaction is required for the stable expression of both proteins. May interact with EEF1A1. As to expression, ubiquitously expressed.

The protein localises to the endoplasmic reticulum-Golgi intermediate compartment membrane. It localises to the golgi apparatus. It is found in the cis-Golgi network membrane. Its subcellular location is the endoplasmic reticulum membrane. The protein resides in the cytoplasm. The protein localises to the nucleus. Functionally, possible role in transport between endoplasmic reticulum and Golgi. The protein is Endoplasmic reticulum-Golgi intermediate compartment protein 2 (ERGIC2) of Homo sapiens (Human).